We begin with the raw amino-acid sequence, 824 residues long: Probable receptor-like protein kinase At5g24010 (824 aa).

Residues 1–24 (MAFPINLTQTLLFFFCPLLHLSFA) form the signal peptide. N-linked (GlcNAc...) asparagine glycans are attached at residues N6, N41, N204, N227, and N291. The Extracellular portion of the chain corresponds to 25-406 (AFTPTDNYLI…SSEVVSGKRN (382 aa)). Residues 407-427 (VVWIVVGSVLGGFVFLSLFFL) traverse the membrane as a helical segment. At 428-824 (SVLCLCRRKN…FSQLMTNAGR (397 aa)) the chain is on the cytoplasmic side. The interval 440–467 (TRSSESTGWTPLRRFRGSSNSRTTERTV) is disordered. Over residues 456–467 (GSSNSRTTERTV) the composition is skewed to polar residues. One can recognise a Protein kinase domain in the interval 489-764 (FDRSLVIGVG…VLWNLEHVLQ (276 aa)). ATP contacts are provided by residues 495–503 (IGVGGFGMV) and K517. D613 serves as the catalytic Proton acceptor. The interval 777 to 803 (DYGDVTDPRTARQGLSNGSNIERDYGD) is disordered.

This sequence belongs to the protein kinase superfamily. Ser/Thr protein kinase family.

Its subcellular location is the membrane. The chain is Probable receptor-like protein kinase At5g24010 from Arabidopsis thaliana (Mouse-ear cress).